Consider the following 295-residue polypeptide: Outer surface protein B (295 aa).

The N-terminal stretch at 1–16 (MKQYLLGFTLVFALIA) is a signal peptide. A lipid anchor (N-palmitoyl cysteine) is attached at Cys17. The S-diacylglycerol cysteine moiety is linked to residue Cys17.

The protein resides in the cell outer membrane. The protein is Outer surface protein B (ospB) of Borreliella burgdorferi (Lyme disease spirochete).